Reading from the N-terminus, the 285-residue chain is Hydrolase in pqqF 5'region (285 aa).

Residues Met-22 to Arg-258 form the CN hydrolase domain. Glu-60 acts as the Proton acceptor in catalysis. The Proton donor role is filled by Lys-131. The active-site Nucleophile is Cys-165.

The protein belongs to the carbon-nitrogen hydrolase superfamily. NIT1/NIT2 family.

The sequence is that of Hydrolase in pqqF 5'region from Pseudomonas protegens (strain DSM 19095 / LMG 27888 / CFBP 6595 / CHA0).